Here is a 322-residue protein sequence, read N- to C-terminus: uncharacterized protein (322 aa).

The Radical SAM core domain maps to 26–267 (HFGHKVFKVA…CDQLEIIPPE (242 aa)). Positions 42, 54, and 57 each coordinate [4Fe-4S] cluster.

The protein belongs to the radical SAM superfamily. The cofactor is [4Fe-4S] cluster.

This is an uncharacterized protein from Bacillus subtilis (strain 168).